The chain runs to 476 residues: Undecaprenyl-phosphate galactose phosphotransferase (476 aa).

Helical transmembrane passes span 15–35, 52–72, 93–113, 115–135, and 283–303; these read IFLA…SLGC, LDTR…WFWI, TIVI…WQFS, YVWV…RALT, and FDIV…IYLW. The Cytoplasmic segment spans residues 304-476; the sequence is YKVTRDGGPA…KVVLRRDGAY (173 aa).

It belongs to the bacterial sugar transferase family.

The protein localises to the cell inner membrane. It catalyses the reaction di-trans,octa-cis-undecaprenyl phosphate + UDP-alpha-D-galactose = alpha-D-galactosyl-di-trans,octa-cis-undecaprenyl diphosphate + UMP. Its pathway is bacterial outer membrane biogenesis; LPS O-antigen biosynthesis. Its function is as follows. Is responsible for transferring galactose-1-phosphate to the lipid precursor undecaprenol phosphate in the first steps of O-polysaccharide biosynthesis. This Salmonella typhimurium (strain LT2 / SGSC1412 / ATCC 700720) protein is Undecaprenyl-phosphate galactose phosphotransferase (rfbP).